The primary structure comprises 198 residues: SOSS complex subunit B2 (198 aa).

The OB DNA-binding region spans 26–89; the sequence is IVLEIGRVTK…SMWKGCLTLY (64 aa). The interval 114 to 198 is disordered; the sequence is EPNPDYRGQQ…ARDPRRAFKR (85 aa). 2 stretches are compositionally biased toward polar residues: residues 136 to 151 and 173 to 188; these read STNTFGPVGNGDQTGP and LPGTPSSQTVRTTISN.

The protein belongs to the SOSS-B family. SOSS-B2 subfamily. Component of the SOSS complex, composed of SOSS-B (SOSS-B1/NABP2 or SOSS-B2/NABP1), SOSS-A/INTS3 and SOSS-C/INIP. SOSS complexes containing SOSS-B1/NABP2 are more abundant than complexes containing SOSS-B2/NABP1. As to expression, ubiquitous with high expression in the thymus.

Its subcellular location is the nucleus. Its function is as follows. Component of the SOSS complex, a multiprotein complex that functions downstream of the MRN complex to promote DNA repair and G2/M checkpoint. In the SOSS complex, acts as a sensor of single-stranded DNA that binds to single-stranded DNA, in particular to polypyrimidines. The SOSS complex associates with DNA lesions and influences diverse endpoints in the cellular DNA damage response including cell-cycle checkpoint activation, recombinational repair and maintenance of genomic stability. Required for efficient homologous recombination-dependent repair of double-strand breaks (DSBs) and ATM-dependent signaling pathways. This chain is SOSS complex subunit B2 (Nabp1), found in Mus musculus (Mouse).